The sequence spans 904 residues: DNA mismatch repair protein MutS (904 aa).

655–662 (GPNMGGKS) lines the ATP pocket.

It belongs to the DNA mismatch repair MutS family.

This protein is involved in the repair of mismatches in DNA. It is possible that it carries out the mismatch recognition step. This protein has a weak ATPase activity. The chain is DNA mismatch repair protein MutS from Rhizorhabdus wittichii (strain DSM 6014 / CCUG 31198 / JCM 15750 / NBRC 105917 / EY 4224 / RW1) (Sphingomonas wittichii).